The primary structure comprises 337 residues: Adenine deaminase (337 aa).

Residues H14, H16, and H194 each contribute to the Zn(2+) site. E197 acts as the Proton donor in catalysis. D275 contributes to the Zn(2+) binding site. Residue D276 participates in substrate binding.

This sequence belongs to the metallo-dependent hydrolases superfamily. Adenosine and AMP deaminases family. Adenine deaminase type 2 subfamily. The cofactor is Zn(2+).

It catalyses the reaction adenine + H2O + H(+) = hypoxanthine + NH4(+). In terms of biological role, catalyzes the hydrolytic deamination of adenine to hypoxanthine. Plays an important role in the purine salvage pathway and in nitrogen catabolism. This Vibrio parahaemolyticus serotype O3:K6 (strain RIMD 2210633) protein is Adenine deaminase.